Consider the following 426-residue polypeptide: Glutamate-1-semialdehyde 2,1-aminomutase (426 aa).

At K265 the chain carries N6-(pyridoxal phosphate)lysine.

This sequence belongs to the class-III pyridoxal-phosphate-dependent aminotransferase family. HemL subfamily. In terms of assembly, homodimer. Pyridoxal 5'-phosphate is required as a cofactor.

Its subcellular location is the cytoplasm. It catalyses the reaction (S)-4-amino-5-oxopentanoate = 5-aminolevulinate. It participates in porphyrin-containing compound metabolism; protoporphyrin-IX biosynthesis; 5-aminolevulinate from L-glutamyl-tRNA(Glu): step 2/2. This Salmonella schwarzengrund (strain CVM19633) protein is Glutamate-1-semialdehyde 2,1-aminomutase.